We begin with the raw amino-acid sequence, 125 residues long: Small ribosomal subunit protein uS12 (125 aa).

The residue at position 89 (aspartate 89) is a 3-methylthioaspartic acid. The tract at residues 105–125 (QGVKDRKQSRSKYGAKKPKAK) is disordered. A compositionally biased stretch (basic residues) spans 113 to 125 (SRSKYGAKKPKAK).

It belongs to the universal ribosomal protein uS12 family. Part of the 30S ribosomal subunit. Contacts proteins S8 and S17. May interact with IF1 in the 30S initiation complex.

In terms of biological role, with S4 and S5 plays an important role in translational accuracy. Functionally, interacts with and stabilizes bases of the 16S rRNA that are involved in tRNA selection in the A site and with the mRNA backbone. Located at the interface of the 30S and 50S subunits, it traverses the body of the 30S subunit contacting proteins on the other side and probably holding the rRNA structure together. The combined cluster of proteins S8, S12 and S17 appears to hold together the shoulder and platform of the 30S subunit. The protein is Small ribosomal subunit protein uS12 of Delftia acidovorans (strain DSM 14801 / SPH-1).